The sequence spans 464 residues: Mothers against decapentaplegic homolog 5 (464 aa).

The MH1 domain maps to 13 to 137 (PAVKRLLGWK…YKRVESPVLP (125 aa)). Residues C65, C110, C122, and H127 each coordinate Zn(2+). The tract at residues 166–258 (HMPLNATFPE…LAPQNMPRGD (93 aa)) is disordered. Residues 173–183 (FPESFQQHSGG) show a composition bias toward polar residues. A compositionally biased stretch (low complexity) spans 199-216 (ASSGTYPNSPASSGPSSP). Residues 237-251 (QDGSQSMETGSSLAP) are compositionally biased toward polar residues. The MH2 domain occupies 270–464 (WCSIVYYELN…SPLNPISSVS (195 aa)).

This sequence belongs to the dwarfin/SMAD family. As to quaternary structure, may form trimers with the co-SMAD SMAD4.

It localises to the cytoplasm. Its subcellular location is the nucleus. Involved in ventralization. May mediate Bmp2b signaling during early phases of embryonic dorsal-ventral pattern formation. Required for initiation of Smad1 expression during gastrulation. This is Mothers against decapentaplegic homolog 5 (smad5) from Danio rerio (Zebrafish).